The chain runs to 115 residues: NADH-ubiquinone oxidoreductase chain 3 (115 aa).

The next 3 helical transmembrane spans lie at 4–24 (LMIL…AFWL), 55–75 (FFLV…LLPL), and 84–104 (INMM…GLAY).

Belongs to the complex I subunit 3 family. Core subunit of respiratory chain NADH dehydrogenase (Complex I) which is composed of 45 different subunits. Interacts with TMEM186. Interacts with TMEM242.

It localises to the mitochondrion inner membrane. It catalyses the reaction a ubiquinone + NADH + 5 H(+)(in) = a ubiquinol + NAD(+) + 4 H(+)(out). Functionally, core subunit of the mitochondrial membrane respiratory chain NADH dehydrogenase (Complex I) which catalyzes electron transfer from NADH through the respiratory chain, using ubiquinone as an electron acceptor. Essential for the catalytic activity of complex I. The polypeptide is NADH-ubiquinone oxidoreductase chain 3 (Podomys floridanus (Florida mouse)).